The following is a 416-amino-acid chain: Muscle-specific homeobox protein tinman (416 aa).

Composition is skewed to polar residues over residues 1–11 (MLQHHQQQAQS) and 18–33 (YTQSPSPGSLTNADAL). 3 disordered regions span residues 1-33 (MLQHHQQQAQSGGYYDHYTQSPSPGSLTNADAL), 246-305 (TASN…RKPR), and 391-416 (VMWPPTMQQSQQQQQHHAQQQQMQHM). Residues 281 to 295 (NSISGNSNPGSNSGS) are compositionally biased toward low complexity. Positions 301–360 (KRKPRVLFSQAQVLELECRFRLKKYLTGAEREIIAQKLNLSATQVKIWFQNRRYKSKRGD) form a DNA-binding region, homeobox. The span at 397 to 416 (MQQSQQQQQHHAQQQQMQHM) shows a compositional bias: low complexity.

It localises to the nucleus. Required for the development of heart and visceral muscle; for the formation of somatic muscles. Has a crucial function in the early mesodermal subdivisions. This chain is Muscle-specific homeobox protein tinman (tin), found in Drosophila melanogaster (Fruit fly).